We begin with the raw amino-acid sequence, 102 residues long: Small ribosomal subunit protein uS10 (102 aa).

The protein belongs to the universal ribosomal protein uS10 family. In terms of assembly, part of the 30S ribosomal subunit.

In terms of biological role, involved in the binding of tRNA to the ribosomes. This is Small ribosomal subunit protein uS10 from Streptococcus uberis (strain ATCC BAA-854 / 0140J).